The chain runs to 432 residues: Asparagine--tRNA ligase (432 aa).

This sequence belongs to the class-II aminoacyl-tRNA synthetase family. As to quaternary structure, homodimer.

The protein localises to the cytoplasm. It carries out the reaction tRNA(Asn) + L-asparagine + ATP = L-asparaginyl-tRNA(Asn) + AMP + diphosphate + H(+). This is Asparagine--tRNA ligase from Lacticaseibacillus paracasei (strain ATCC 334 / BCRC 17002 / CCUG 31169 / CIP 107868 / KCTC 3260 / NRRL B-441) (Lactobacillus paracasei).